The primary structure comprises 189 residues: Mediator of RNA polymerase II transcription subunit 10b (189 aa).

Residues 1–22 (MDPTQNTSAGIGGSNGTIRYQT) are disordered.

It belongs to the Mediator complex subunit 10 family. As to quaternary structure, component of the Mediator complex.

Its subcellular location is the nucleus. Its function is as follows. Component of the Mediator complex, a coactivator involved in the regulated transcription of nearly all RNA polymerase II-dependent genes. Mediator functions as a bridge to convey information from gene-specific regulatory proteins to the basal RNA polymerase II transcription machinery. The Mediator complex, having a compact conformation in its free form, is recruited to promoters by direct interactions with regulatory proteins and serves for the assembly of a functional preinitiation complex with RNA polymerase II and the general transcription factors. In Arabidopsis thaliana (Mouse-ear cress), this protein is Mediator of RNA polymerase II transcription subunit 10b (MED10B).